A 133-amino-acid chain; its full sequence is Small ribosomal subunit protein uS8c (133 aa).

This sequence belongs to the universal ribosomal protein uS8 family. Part of the 30S ribosomal subunit.

It is found in the plastid. The protein resides in the chloroplast. In terms of biological role, one of the primary rRNA binding proteins, it binds directly to 16S rRNA central domain where it helps coordinate assembly of the platform of the 30S subunit. In Mesostigma viride (Green alga), this protein is Small ribosomal subunit protein uS8c (rps8).